Here is a 143-residue protein sequence, read N- to C-terminus: Large ribosomal subunit protein uL13 (143 aa).

Belongs to the universal ribosomal protein uL13 family. Part of the 50S ribosomal subunit.

Functionally, this protein is one of the early assembly proteins of the 50S ribosomal subunit, although it is not seen to bind rRNA by itself. It is important during the early stages of 50S assembly. This is Large ribosomal subunit protein uL13 from Dichelobacter nodosus (strain VCS1703A).